A 343-amino-acid chain; its full sequence is Heat-inducible transcription repressor HrcA (343 aa).

Belongs to the HrcA family.

Its function is as follows. Negative regulator of class I heat shock genes (grpE-dnaK-dnaJ and groELS operons). Prevents heat-shock induction of these operons. This Caldanaerobacter subterraneus subsp. tengcongensis (strain DSM 15242 / JCM 11007 / NBRC 100824 / MB4) (Thermoanaerobacter tengcongensis) protein is Heat-inducible transcription repressor HrcA.